A 245-amino-acid chain; its full sequence is Syntaxin-61 (245 aa).

Residues Met1–Gln224 are Cytoplasmic-facing. The 63-residue stretch at Met153–Val215 folds into the t-SNARE coiled-coil homology domain. The chain crosses the membrane as a helical; Anchor for type IV membrane protein span at residues Met225–Thr245.

The protein belongs to the syntaxin family. As to quaternary structure, interacts with VTI12 and either SYP41, SYP42 or SYP51 in the trans-Golgi network or with VTI11 and SYP51 in the prevacuolar compartment to form t-SNARE complexes. Core constituent of the SNARE complex required for membrane fusion at the trans-Golgi network. Also observed in the SYP121-complex and cellulose synthases. Colocalizes with PIP2-7 and SYP121 in trafficking vesicles and at the plasma membrane. Interacts with SYP121 and PIP2-7. Expressed in root, leaf, stem, flower and silique, but not in hypocotyl or young leaf. Strong expression in the vasculature and in guard cells of the leaf epidermis.

The protein resides in the golgi apparatus. It is found in the trans-Golgi network membrane. The protein localises to the prevacuolar compartment membrane. Vesicle trafficking protein that functions in the secretory pathway; the fusion of phospholipid vesicles containing SYP61 and VTI12 is triggered by YKT61 and YKT62. Together with VTI12, required for membrane fusion. Involved in osmotic stress tolerance and in abscisic acid (ABA) regulation of stomatal responses. Plays a role in the exocytic trafficking of cellulose synthases (CESAs) and the transport of cell wall components to the plasma membrane. Together with SYP121, regulates the post-Golgi trafficking of the aquaporin PIP2-7 to the plasma membrane, thus modulating cell membrane water permeability. The sequence is that of Syntaxin-61 from Arabidopsis thaliana (Mouse-ear cress).